The following is a 34-amino-acid chain: Potassium channel toxin alpha-KTx 6.2 (34 aa).

4 disulfide bridges follow: cysteine 3–cysteine 24, cysteine 9–cysteine 29, cysteine 13–cysteine 19, and cysteine 31–cysteine 34. At cysteine 34 the chain carries Cysteine amide.

The protein belongs to the short scorpion toxin superfamily. Potassium channel inhibitor family. Alpha-KTx 06 subfamily. As to expression, expressed by the venom gland.

The protein localises to the secreted. Functionally, blocks voltage-gated potassium channels Kv1.2/KCNA2 (IC(50)=0.12-0.8 nM), KCa3.1/KCNN4 (IC(50)=1-2.2 nM), Shaker B (IC(50)=2.39-80 nM), Kv1.1/KCNA1 (IC(50)=37-45 or no activity, depending on the study), Kv1.3/KCNA3 (IC(50)=150-180 or no activity, depending on the study). The sequence is that of Potassium channel toxin alpha-KTx 6.2 from Scorpio palmatus (Israeli golden scorpion).